The sequence spans 205 residues: Coatomer subunit zeta-2 (205 aa).

Positions 1–12 (MQRPEAWPRPHP) are enriched in basic and acidic residues. The interval 1–33 (MQRPEAWPRPHPGEGASAAQAGGAAPPTRATEQ) is disordered. Positions 13–30 (GEGASAAQAGGAAPPTRA) are enriched in low complexity.

It belongs to the adaptor complexes small subunit family. In terms of assembly, oligomeric complex.

It is found in the cytoplasm. The protein resides in the cytosol. Its subcellular location is the endoplasmic reticulum-Golgi intermediate compartment membrane. It localises to the golgi apparatus membrane. The protein localises to the cytoplasmic vesicle. It is found in the COPI-coated vesicle membrane. Its function is as follows. The coatomer is a cytosolic protein complex that binds to dilysine motifs and reversibly associates with Golgi non-clathrin-coated vesicles, which further mediate biosynthetic protein transport from the ER, via the Golgi up to the trans Golgi network. Coatomer complex is required for budding from Golgi membranes, and is essential for the retrograde Golgi-to-ER transport of dilysine-tagged proteins. The zeta subunit may be involved in regulating the coat assembly and, hence, the rate of biosynthetic protein transport due to its association-dissociation properties with the coatomer complex. This is Coatomer subunit zeta-2 (Copz2) from Mus musculus (Mouse).